Reading from the N-terminus, the 285-residue chain is Cell division protein ZipA (285 aa).

Position 1 (Met1) is a topological domain, periplasmic. The helical transmembrane segment at 2–22 (EIGLREWLIVIGIVVIGGILF) threads the bilayer. The Cytoplasmic segment spans residues 23–285 (DGWRRMRGSK…FERRQLTHKR (263 aa)). The disordered stretch occupies residues 49–88 (AVSENSELLGPSRSVDFPQGAGFEPDEENLPSLSVRGPSR).

This sequence belongs to the ZipA family. In terms of assembly, interacts with FtsZ via their C-terminal domains.

It localises to the cell inner membrane. Its function is as follows. Essential cell division protein that stabilizes the FtsZ protofilaments by cross-linking them and that serves as a cytoplasmic membrane anchor for the Z ring. Also required for the recruitment to the septal ring of downstream cell division proteins. This Azotobacter vinelandii (strain DJ / ATCC BAA-1303) protein is Cell division protein ZipA.